A 419-amino-acid chain; its full sequence is Lipoyl synthase, mitochondrial (419 aa).

Residues 1–26 constitute a mitochondrion transit peptide; it reads MAVCAGRLKCFGNPAVSLRTAASRAY. The span at 28–47 shows a compositional bias: low complexity; that stretch reads TTTSPDPAIPSSSSASSSSA. Positions 28–61 are disordered; the sequence is TTTSPDPAIPSSSSASSSSALPKRPQTSFRDKLN. 7 residues coordinate [4Fe-4S] cluster: cysteine 136, cysteine 141, cysteine 147, cysteine 167, cysteine 171, cysteine 174, and serine 382. Residues 150–371 enclose the Radical SAM core domain; the sequence is GSSKSAATAT…KDRALEMGFL (222 aa). Residues 399–419 form a disordered region; sequence AESTGPESTNVPNVTPDAIVR.

Belongs to the radical SAM superfamily. Lipoyl synthase family. It depends on [4Fe-4S] cluster as a cofactor.

The protein localises to the mitochondrion. It catalyses the reaction [[Fe-S] cluster scaffold protein carrying a second [4Fe-4S](2+) cluster] + N(6)-octanoyl-L-lysyl-[protein] + 2 oxidized [2Fe-2S]-[ferredoxin] + 2 S-adenosyl-L-methionine + 4 H(+) = [[Fe-S] cluster scaffold protein] + N(6)-[(R)-dihydrolipoyl]-L-lysyl-[protein] + 4 Fe(3+) + 2 hydrogen sulfide + 2 5'-deoxyadenosine + 2 L-methionine + 2 reduced [2Fe-2S]-[ferredoxin]. It participates in protein modification; protein lipoylation via endogenous pathway; protein N(6)-(lipoyl)lysine from octanoyl-[acyl-carrier-protein]: step 2/2. Its function is as follows. Catalyzes the radical-mediated insertion of two sulfur atoms into the C-6 and C-8 positions of the octanoyl moiety bound to the lipoyl domains of lipoate-dependent enzymes, thereby converting the octanoylated domains into lipoylated derivatives. The protein is Lipoyl synthase, mitochondrial of Coccidioides posadasii (strain C735) (Valley fever fungus).